The sequence spans 400 residues: MVSCQGTRPCIVNLLTMPSEDKLGEEISTRVINEYSKLKSACRPIIRPSGIREWTILAGVAAINRDGGANKIEILSIATGVKALPDSELQRSEGKILHDCHAEILALRGANTVLLNRIQNYNPSSGDKFIQHNDEIPARFNLKENWELALYISRLPCGDASMSFLNDNCKNDDFIKIEDSDEFQYVDRSVKTILRGRLNFNRRNVVRTKPGRYDSNITLSKSCSDKLLMKQRSSVLNCLNYELFEKPVFLKYIVIPNLEDETKHHLEQSFHTRLPNLDNEIKFLNCLKPFYDDKLDEEDVPGLMCSVKLFMDDFSTEEAILNGVRNGFYTKSSKPLRKHCQSQVSRFAQWELFKKIRPEYEGISYLEFKSRQKKRSQLIIAIKNILSPDGWIPTRTDDVK.

The 325-residue stretch at serine 76–lysine 400 folds into the A to I editase domain. Histidine 101 lines the Zn(2+) pocket. Glutamate 103 acts as the Proton donor in catalysis. Arginine 108 provides a ligand contact to 1D-myo-inositol hexakisphosphate. Residues cysteine 157 and cysteine 223 each contribute to the Zn(2+) site. 4 residues coordinate 1D-myo-inositol hexakisphosphate: lysine 226, arginine 232, lysine 369, and arginine 375.

It belongs to the ADAT1 family. The cofactor is 1D-myo-inositol hexakisphosphate. It depends on Zn(2+) as a cofactor.

The catalysed reaction is adenosine(37) in tRNA(Ala) + H2O + H(+) = inosine(37) in tRNA(Ala) + NH4(+). Its function is as follows. Deaminates adenosine-37 to inosine in tRNA-Ala. The sequence is that of tRNA-specific adenosine deaminase 1 (TAD1) from Saccharomyces cerevisiae (strain ATCC 204508 / S288c) (Baker's yeast).